Consider the following 3130-residue polypeptide: DNA polymerase zeta catalytic subunit (3130 aa).

Disordered stretches follow at residues 263-295 (AIWEDEKQRRRNRNETSQMSQPESQDHRFVPAT), 425-457 (GYRGERNRMPSPCRSFGNNKYPQNSDDEENEPQ), 487-510 (LCRNTHRSSTEDDDSSSGEEMEWS), 524-548 (LDGTADENSDNPLNNENSRTHSSVI), 697-728 (PNENTLGKNSFNFSDLNHSKNKVSSEGNEKGN), and 817-871 (VTYK…EKDN). The segment covering 286 to 295 (SQDHRFVPAT) has biased composition (basic and acidic residues). Residues 497–509 (EDDDSSSGEEMEW) show a composition bias toward acidic residues. Polar residues-rich tracts occupy residues 533–548 (DNPLNNENSRTHSSVI) and 699–728 (ENTLGKNSFNFSDLNHSKNKVSSEGNEKGN). Positions 828 to 838 (SRLKLNKRKLA) are enriched in basic residues. The segment covering 842–854 (ETSTKSSETGSTK) has biased composition (low complexity). The segment covering 855–866 (DNFIQNNPCNSN) has biased composition (polar residues). Ser-1030 is subject to Phosphoserine. Disordered regions lie at residues 1035–1095 (YPIY…YNAE), 1162–1231 (SRIG…DEKI), and 1537–1600 (RQQK…KLLK). Thr-1041 bears the Phosphothreonine mark. Composition is skewed to basic residues over residues 1043-1061 (KKSHRRKSKHKSAKKKTGK) and 1166-1179 (KTSRARAQIKKSKA). Positions 1213-1231 (KTNEKGTSRKHTTLKDEKI) are enriched in basic and acidic residues. Over residues 1540 to 1565 (KAQNANTTQDPLSNKHQPNKNISGSL) the composition is skewed to polar residues. The span at 1570–1589 (ANKRTRSVTSPRKPRTPRST) shows a compositional bias: basic residues. The segment covering 1590–1600 (KQKEKIPKLLK) has biased composition (basic and acidic residues). At Ser-1724 the chain carries Phosphoserine. Disordered stretches follow at residues 1845–1882 (NDMLTPTPDSSPRSTSSPSQSKNGSFTPRTANILKPLM), 1962–1984 (NPRPGSPLRSGQGVVNKGSSNSP), 2017–2050 (ERSKKLPKTKPTGVVKSAENFSSSVNPDDKPVVP), 2080–2150 (PTTG…SPVE), and 2216–2236 (APGLSPLSTEPKTQKLSNKKG). A mediates interaction with MAD2L2 region spans residues 1847–1898 (MLTPTPDSSPRSTSSPSQSKNGSFTPRTANILKPLMSPPSREEIMATLLDHD). A compositionally biased stretch (low complexity) spans 1849 to 1865 (TPTPDSSPRSTSSPSQS). Ser-1967 carries the phosphoserine modification. The segment covering 2080–2092 (PTTGCSQTASESQ) has biased composition (polar residues). The span at 2113–2122 (YYISYSSPDS) shows a compositional bias: low complexity. Polar residues predominate over residues 2221 to 2236 (PLSTEPKTQKLSNKKG). Cys-3042, Cys-3045, Cys-3054, and Cys-3057 together coordinate Zn(2+). The CysA-type zinc finger occupies 3042 to 3057 (CPVCDDLTQHGICSKC). Residues Cys-3086, Cys-3089, Cys-3099, and Cys-3104 each contribute to the [4Fe-4S] cluster site. Residues 3086–3104 (CKNCTGCFDRHIPCVSLNC) carry the CysB motif motif.

It belongs to the DNA polymerase type-B family. As to quaternary structure, heterodimer with MAD2L2. This dimer forms the minimal DNA polymerase zeta complex (Pol-zeta2), with REV3L bearing DNA polymerase catalytic activity, although its activity is very low in this context. Component of the tetrameric Pol-zeta complex (Pol-zeta4), which consists of REV3L, MAD2L2, POLD2 and POLD3; Pol-zeta4 is the fully active form of DNA polymerase zeta. [4Fe-4S] cluster serves as cofactor. As to expression, ubiquitously expressed.

It localises to the nucleus. The enzyme catalyses DNA(n) + a 2'-deoxyribonucleoside 5'-triphosphate = DNA(n+1) + diphosphate. Catalytic subunit of the DNA polymerase zeta complex, an error-prone polymerase specialized in translesion DNA synthesis (TLS). Lacks an intrinsic 3'-5' exonuclease activity and thus has no proofreading function. The sequence is that of DNA polymerase zeta catalytic subunit (REV3L) from Homo sapiens (Human).